The primary structure comprises 237 residues: RING-H2 finger protein ATL57 (237 aa).

A helical membrane pass occupies residues 51-71 (ALTIFILLVALFFMGFFSVYF). An RING-type; atypical zinc finger spans residues 140–182 (CVICLSDFEEGETVKVIPHCGHVFHVDCVDTWLSSYVTCPLCR).

The protein belongs to the RING-type zinc finger family. ATL subfamily.

The protein localises to the membrane. The enzyme catalyses S-ubiquitinyl-[E2 ubiquitin-conjugating enzyme]-L-cysteine + [acceptor protein]-L-lysine = [E2 ubiquitin-conjugating enzyme]-L-cysteine + N(6)-ubiquitinyl-[acceptor protein]-L-lysine.. Its pathway is protein modification; protein ubiquitination. In Arabidopsis thaliana (Mouse-ear cress), this protein is RING-H2 finger protein ATL57 (ATL57).